A 468-amino-acid polypeptide reads, in one-letter code: Chromosomal replication initiator protein DnaA (468 aa).

Residues 1 to 84 (MSSSLWLQCL…RFEVGSKPIS (84 aa)) are domain I, interacts with DnaA modulators. Residues 84–131 (SAPPRPQRTAADVAAATSAPAQMQARQSLHKPWESRGPEPVDDLNHRS) are domain II. The interval 112–132 (LHKPWESRGPEPVDDLNHRSN) is disordered. Residues 114–129 (KPWESRGPEPVDDLNH) show a composition bias toward basic and acidic residues. The tract at residues 132–348 (NVNPKHKFTN…GALNRVVANA (217 aa)) is domain III, AAA+ region. Residues G176, G178, K179, and T180 each contribute to the ATP site. A domain IV, binds dsDNA region spans residues 349–468 (NFTGRAITID…YSNLIRTLSS (120 aa)).

The protein belongs to the DnaA family. Oligomerizes as a right-handed, spiral filament on DNA at oriC.

Its subcellular location is the cytoplasm. Plays an essential role in the initiation and regulation of chromosomal replication. ATP-DnaA binds to the origin of replication (oriC) to initiate formation of the DNA replication initiation complex once per cell cycle. Binds the DnaA box (a 9 base pair repeat at the origin) and separates the double-stranded (ds)DNA. Forms a right-handed helical filament on oriC DNA; dsDNA binds to the exterior of the filament while single-stranded (ss)DNA is stabiized in the filament's interior. The ATP-DnaA-oriC complex binds and stabilizes one strand of the AT-rich DNA unwinding element (DUE), permitting loading of DNA polymerase. After initiation quickly degrades to an ADP-DnaA complex that is not apt for DNA replication. Binds acidic phospholipids. This is Chromosomal replication initiator protein DnaA from Aliivibrio salmonicida (strain LFI1238) (Vibrio salmonicida (strain LFI1238)).